The primary structure comprises 356 residues: Magnesium-protoporphyrin IX monomethyl ester [oxidative] cyclase (356 aa).

This sequence belongs to the AcsF family. The cofactor is Fe cation.

It catalyses the reaction Mg-protoporphyrin IX 13-monomethyl ester + 3 NADPH + 3 O2 + 2 H(+) = 3,8-divinyl protochlorophyllide a + 3 NADP(+) + 5 H2O. Its pathway is porphyrin-containing compound metabolism; chlorophyll biosynthesis (light-independent). Catalyzes the formation of the isocyclic ring in chlorophyll biosynthesis. Mediates the cyclase reaction, which results in the formation of divinylprotochlorophyllide (Pchlide) characteristic of all chlorophylls from magnesium-protoporphyrin IX 13-monomethyl ester (MgPMME). This Synechococcus sp. (strain CC9605) protein is Magnesium-protoporphyrin IX monomethyl ester [oxidative] cyclase.